Here is a 225-residue protein sequence, read N- to C-terminus: 2-C-methyl-D-erythritol 4-phosphate cytidylyltransferase (225 aa).

The protein belongs to the IspD/TarI cytidylyltransferase family. IspD subfamily.

It carries out the reaction 2-C-methyl-D-erythritol 4-phosphate + CTP + H(+) = 4-CDP-2-C-methyl-D-erythritol + diphosphate. Its pathway is isoprenoid biosynthesis; isopentenyl diphosphate biosynthesis via DXP pathway; isopentenyl diphosphate from 1-deoxy-D-xylulose 5-phosphate: step 2/6. In terms of biological role, catalyzes the formation of 4-diphosphocytidyl-2-C-methyl-D-erythritol from CTP and 2-C-methyl-D-erythritol 4-phosphate (MEP). This Prochlorococcus marinus (strain MIT 9313) protein is 2-C-methyl-D-erythritol 4-phosphate cytidylyltransferase.